We begin with the raw amino-acid sequence, 433 residues long: Actin-related protein 4 (433 aa).

Positions 289–317 (GSDEEMNEEPSKPIEQTENNEVSQQDSSV) are disordered. The span at 302–317 (IEQTENNEVSQQDSSV) shows a compositional bias: polar residues.

This sequence belongs to the actin family. ARP4 subfamily. Component of the NuA4 histone acetyltransferase complex, of the INO80 chromatin remodeling complex, and of the SWR1 chromatin remodeling complex.

Its subcellular location is the nucleus. Functionally, chromatin interaction component of the NuA4 histone acetyltransferase complex which is involved in transcriptional activation of selected genes principally by acetylation of nucleosomal histone H4 and H2A. The NuA4 complex is also involved in DNA repair. Is required for NuA4 complex integrity. Component of the SWR1 complex which mediates the ATP-dependent exchange of histone H2A for the H2A variant HZT1 leading to transcriptional regulation of selected genes by chromatin remodeling. Component of the INO80 complex which remodels chromatin by shifting nucleosomes and is involved in DNA repair. This is Actin-related protein 4 (alp5) from Schizosaccharomyces pombe (strain 972 / ATCC 24843) (Fission yeast).